Here is a 229-residue protein sequence, read N- to C-terminus: Orotidine 5'-phosphate decarboxylase (229 aa).

Substrate is bound by residues D11, K33, 60-69, T119, R180, Q189, G209, and R210; that span reads DLKFHDIPNT. K62 acts as the Proton donor in catalysis.

The protein belongs to the OMP decarboxylase family. Type 1 subfamily. In terms of assembly, homodimer.

It catalyses the reaction orotidine 5'-phosphate + H(+) = UMP + CO2. Its pathway is pyrimidine metabolism; UMP biosynthesis via de novo pathway; UMP from orotate: step 2/2. In terms of biological role, catalyzes the decarboxylation of orotidine 5'-monophosphate (OMP) to uridine 5'-monophosphate (UMP). This chain is Orotidine 5'-phosphate decarboxylase, found in Dichelobacter nodosus (strain VCS1703A).